Consider the following 206-residue polypeptide: Probable N-acetyltransferase 14 (206 aa).

Residues 6–206 enclose the N-acetyltransferase domain; sequence LSVREMREDE…MLVREFSKDL (201 aa). The helical transmembrane segment at 57–77 threads the bilayer; the sequence is FILASFALALLLPVFLAVAAV.

The protein belongs to the camello family.

Its subcellular location is the membrane. Functionally, probable acetyltransferase that binds the 5'-GGACTACAG-3' sequence of coproporphyrinogen oxidase promoter. Able to activate transcription of a reporter construct in vitro. Probable acetyltransferase. Its function is as follows. May act as a transcription factor regulating the expression of coproporphyrinogen oxidase by binding to a promoter regulatory element. The protein is Probable N-acetyltransferase 14 (Nat14) of Mus musculus (Mouse).